The chain runs to 211 residues: Protein U63 (211 aa).

The protein belongs to the herpesviridae UL92 family.

This chain is Protein U63 (U63), found in Human herpesvirus 7 (strain JI) (HHV-7).